The following is a 130-amino-acid chain: ATP synthase epsilon chain (130 aa).

The protein belongs to the ATPase epsilon chain family. F-type ATPases have 2 components, CF(1) - the catalytic core - and CF(0) - the membrane proton channel. CF(1) has five subunits: alpha(3), beta(3), gamma(1), delta(1), epsilon(1). CF(0) has three main subunits: a, b and c.

The protein localises to the cell inner membrane. Produces ATP from ADP in the presence of a proton gradient across the membrane. This Fuscovulum blasticum (Rhodobacter blasticus) protein is ATP synthase epsilon chain (atpC).